A 155-amino-acid polypeptide reads, in one-letter code: Interleukin-2 (155 aa).

An N-terminal signal peptide occupies residues 1-20; the sequence is MYKMQLLSCIALTLVLVANS. Thr23 carries O-linked (GalNAc...) threonine glycosylation. A disulfide bridge connects residues Cys79 and Cys127.

The protein belongs to the IL-2 family.

It is found in the secreted. Functionally, cytokine produced by activated CD4-positive helper T-cells and to a lesser extend activated CD8-positive T-cells and natural killer (NK) cells that plays pivotal roles in the immune response and tolerance. Binds to a receptor complex composed of either the high-affinity trimeric IL-2R (IL2RA/CD25, IL2RB/CD122 and IL2RG/CD132) or the low-affinity dimeric IL-2R (IL2RB and IL2RG). Interaction with the receptor leads to oligomerization and conformation changes in the IL-2R subunits resulting in downstream signaling starting with phosphorylation of JAK1 and JAK3. In turn, JAK1 and JAK3 phosphorylate the receptor to form a docking site leading to the phosphorylation of several substrates including STAT5. This process leads to activation of several pathways including STAT, phosphoinositide-3-kinase/PI3K and mitogen-activated protein kinase/MAPK pathways. Functions as a T-cell growth factor and can increase NK-cell cytolytic activity as well. Promotes strong proliferation of activated B-cells and subsequently immunoglobulin production. Plays a pivotal role in regulating the adaptive immune system by controlling the survival and proliferation of regulatory T-cells, which are required for the maintenance of immune tolerance. Moreover, participates in the differentiation and homeostasis of effector T-cell subsets, including Th1, Th2, Th17 as well as memory CD8-positive T-cells. This Halichoerus grypus (Gray seal) protein is Interleukin-2 (IL2).